A 555-amino-acid chain; its full sequence is GPI-anchor transamidase component PIGS (555 aa).

The Cytoplasmic portion of the chain corresponds to 2 to 18 (AAAGAAATHLEVARGKR). Positions 15 and 18 each coordinate a cardiolipin. Residues 19–39 (AALFFAAVAIVLGLPLWWKTT) form a helical membrane-spanning segment. Residues 40–517 (ETYRASLPYS…LHLLYFPDDQ (478 aa)) lie on the Lumenal side of the membrane. N-linked (GlcNAc...) asparagine glycans are attached at residues asparagine 267 and asparagine 370. A helical membrane pass occupies residues 518–532 (KFAIYIPLFLPMAVP). The Cytoplasmic segment spans residues 533–555 (ILLSLVKIFLETRKSWRKPEKTD).

Belongs to the PIGS family. Heteropentamer. Part of the GPI-anchor transamidase complex, consisting of PIGK, PIGT, PIGS, PIGU and GAA1.

The protein resides in the endoplasmic reticulum membrane. It participates in glycolipid biosynthesis; glycosylphosphatidylinositol-anchor biosynthesis. Functionally, component of the glycosylphosphatidylinositol-anchor (GPI-anchor) transamidase (GPI-T) complex that catalyzes the formation of the linkage between a proprotein and a GPI-anchor and participates in GPI anchored protein biosynthesis. The polypeptide is GPI-anchor transamidase component PIGS (Homo sapiens (Human)).